A 227-amino-acid polypeptide reads, in one-letter code: Cytochrome c oxidase subunit 2 (227 aa).

At 1–14 (MAHPVQLGLQDATS) the chain is on the mitochondrial intermembrane side. The helical transmembrane segment at 15–45 (PVMEELITFHDHALMAMSLISLLVLYALFST) threads the bilayer. Residues 46 to 59 (LTTKLTNTNITDAQ) lie on the Mitochondrial matrix side of the membrane. A helical transmembrane segment spans residues 60–87 (EMEIIWTILPAIILVLIALPSLRILYLT). At 88 to 227 (DEVNNPSFTI…IFEMGPVFTL (140 aa)) the chain is on the mitochondrial intermembrane side. Cu cation is bound by residues His161, Cys196, Glu198, Cys200, His204, and Met207. Position 198 (Glu198) interacts with Mg(2+).

This sequence belongs to the cytochrome c oxidase subunit 2 family. As to quaternary structure, component of the cytochrome c oxidase (complex IV, CIV), a multisubunit enzyme composed of 14 subunits. The complex is composed of a catalytic core of 3 subunits MT-CO1, MT-CO2 and MT-CO3, encoded in the mitochondrial DNA, and 11 supernumerary subunits COX4I, COX5A, COX5B, COX6A, COX6B, COX6C, COX7A, COX7B, COX7C, COX8 and NDUFA4, which are encoded in the nuclear genome. The complex exists as a monomer or a dimer and forms supercomplexes (SCs) in the inner mitochondrial membrane with NADH-ubiquinone oxidoreductase (complex I, CI) and ubiquinol-cytochrome c oxidoreductase (cytochrome b-c1 complex, complex III, CIII), resulting in different assemblies (supercomplex SCI(1)III(2)IV(1) and megacomplex MCI(2)III(2)IV(2)). Found in a complex with TMEM177, COA6, COX18, COX20, SCO1 and SCO2. Interacts with TMEM177 in a COX20-dependent manner. Interacts with COX20. Interacts with COX16. Cu cation serves as cofactor.

Its subcellular location is the mitochondrion inner membrane. It carries out the reaction 4 Fe(II)-[cytochrome c] + O2 + 8 H(+)(in) = 4 Fe(III)-[cytochrome c] + 2 H2O + 4 H(+)(out). Functionally, component of the cytochrome c oxidase, the last enzyme in the mitochondrial electron transport chain which drives oxidative phosphorylation. The respiratory chain contains 3 multisubunit complexes succinate dehydrogenase (complex II, CII), ubiquinol-cytochrome c oxidoreductase (cytochrome b-c1 complex, complex III, CIII) and cytochrome c oxidase (complex IV, CIV), that cooperate to transfer electrons derived from NADH and succinate to molecular oxygen, creating an electrochemical gradient over the inner membrane that drives transmembrane transport and the ATP synthase. Cytochrome c oxidase is the component of the respiratory chain that catalyzes the reduction of oxygen to water. Electrons originating from reduced cytochrome c in the intermembrane space (IMS) are transferred via the dinuclear copper A center (CU(A)) of subunit 2 and heme A of subunit 1 to the active site in subunit 1, a binuclear center (BNC) formed by heme A3 and copper B (CU(B)). The BNC reduces molecular oxygen to 2 water molecules using 4 electrons from cytochrome c in the IMS and 4 protons from the mitochondrial matrix. This chain is Cytochrome c oxidase subunit 2 (MT-CO2), found in Cercocebus galeritus (Tana river mangabey).